Here is a 581-residue protein sequence, read N- to C-terminus: ATP-dependent lipid A-core flippase (581 aa).

6 consecutive transmembrane segments (helical) span residues 21 to 41 (TVAI…ALFI), 65 to 85 (FVVI…SYCL), 138 to 158 (ALLI…VMFY), 161 to 181 (WQLS…VTVV), 246 to 266 (LSVS…LWVV), and 271 to 291 (MIDT…MMLL). Positions 24–306 (IVAIIGMIGY…LANVNSDMQR (283 aa)) constitute an ABC transmembrane type-1 domain. In terms of domain architecture, ABC transporter spans 338-575 (IEVKNVTFKY…NGTYSALCKM (238 aa)). Position 372 to 379 (372 to 379 (GRSGSGKS)) interacts with ATP.

Belongs to the ABC transporter superfamily. Lipid exporter (TC 3.A.1.106) family. As to quaternary structure, homodimer.

It localises to the cell inner membrane. It carries out the reaction ATP + H2O + lipid A-core oligosaccharideSide 1 = ADP + phosphate + lipid A-core oligosaccharideSide 2.. In terms of biological role, involved in lipopolysaccharide (LPS) biosynthesis. Translocates lipid A-core from the inner to the outer leaflet of the inner membrane. Transmembrane domains (TMD) form a pore in the inner membrane and the ATP-binding domain (NBD) is responsible for energy generation. This is ATP-dependent lipid A-core flippase from Pseudoalteromonas translucida (strain TAC 125).